A 447-amino-acid chain; its full sequence is MVQMKKCTTKEDVLEAVKERDVKFIRTQFTDTLGIIKSWAIPAEQLEEAFENGVMFDGSSIQGFTRIEESDMKLALDPSTFRILPWRPATGAVARILGDVYLPDGNPFKGDPRYVLKTAIKEAEKMGFSMNVGPELEFFLFKLDANGNPTTELTDQGGYFDFAPLDRAQDVRRDIDYALEHMGFQIEASHHEVAPSQHEIDFRFGDVLCTADNVVTFKYVVKSIAYHKGYYASFMPKPLFGVNGSGMHSNQSLFKDGKNVFYDPDTPTKLSQDAMYYIGGLLKHIREFTAVTNPVVNSYKRLVPGYEAPVYISWSAQNRSSLIRIPATRGNGTRIELRCPDPACNPYLAFALMLRAGLEGIKNKIDPGEPTNVNIFHLSDKEREERGIRSLPADLKEAIDEMKGSKFVKEALGEHVFSHYLCAKEMEWDEYKAVVHPWELSRYLSML.

The GS beta-grasp domain occupies 20 to 105; it reads RDVKFIRTQF…ILGDVYLPDG (86 aa). A GS catalytic domain is found at 112–447; it reads PRYVLKTAIK…WELSRYLSML (336 aa). 2 residues coordinate Mg(2+): glutamate 135 and glutamate 137. Glutamate 187 serves as a coordination point for ATP. Mg(2+) contacts are provided by glutamate 192 and glutamate 199. L-glutamate-binding positions include 243 to 244 and glycine 244; that span reads NG. Histidine 248 is a Mg(2+) binding site. Position 252 (serine 252) interacts with ATP. Residues arginine 301, glutamate 307, and arginine 319 each contribute to the L-glutamate site. ATP is bound by residues arginine 319 and arginine 324. Position 336 (glutamate 336) interacts with Mg(2+). Arginine 338 contacts L-glutamate.

Belongs to the glutamine synthetase family. As to quaternary structure, homohexamer. Interacts and forms stable complexes with the regulatory protein GlnK1. It depends on Mg(2+) as a cofactor.

The protein resides in the cytoplasm. It catalyses the reaction L-glutamate + NH4(+) + ATP = L-glutamine + ADP + phosphate + H(+). Its activity is regulated as follows. Directly stimulated by the effector molecule 2-oxoglutarate. Inhibited by GlnK1. 2-oxoglutarate antagonizes the inhibitory effects of GlnK1, but does not prevent GlnK1/GlnA1 complex formation. Functionally, probably involved in nitrogen metabolism via ammonium assimilation. Catalyzes the ATP-dependent biosynthesis of glutamine from glutamate and ammonia. The chain is Glutamine synthetase from Methanosarcina mazei (strain ATCC BAA-159 / DSM 3647 / Goe1 / Go1 / JCM 11833 / OCM 88) (Methanosarcina frisia).